Here is a 203-residue protein sequence, read N- to C-terminus: Ras-like protein 1 (203 aa).

GTP is bound at residue 17–24 (GGGGVGKS). The short motif at 39–47 (YDPTIEDSY) is the Effector region element. Residues 64–68 (DTAGQ) and 123–126 (NKCD) contribute to the GTP site. Cys-200 bears the Cysteine methyl ester mark. The S-farnesyl cysteine moiety is linked to residue Cys-200. The propeptide at 201–203 (ILM) is removed in mature form.

This sequence belongs to the small GTPase superfamily. Ras family.

The protein localises to the cell membrane. It catalyses the reaction GTP + H2O = GDP + phosphate + H(+). Its activity is regulated as follows. Alternates between an inactive form bound to GDP and an active form bound to GTP. Activated by a guanine nucleotide-exchange factor (GEF) and inactivated by a GTPase-activating protein (GAP). The protein is Ras-like protein 1 (RAS1) of Mucor circinelloides f. lusitanicus (Mucor racemosus var. lusitanicus).